We begin with the raw amino-acid sequence, 229 residues long: Uracil-DNA glycosylase (229 aa).

Catalysis depends on aspartate 64, which acts as the Proton acceptor.

This sequence belongs to the uracil-DNA glycosylase (UDG) superfamily. UNG family.

It is found in the cytoplasm. It catalyses the reaction Hydrolyzes single-stranded DNA or mismatched double-stranded DNA and polynucleotides, releasing free uracil.. Its function is as follows. Excises uracil residues from the DNA which can arise as a result of misincorporation of dUMP residues by DNA polymerase or due to deamination of cytosine. The polypeptide is Uracil-DNA glycosylase (Klebsiella pneumoniae subsp. pneumoniae (strain ATCC 700721 / MGH 78578)).